The following is a 394-amino-acid chain: Elongation factor Tu (394 aa).

One can recognise a tr-type G domain in the interval 10-205 (KPHMNVGTIG…TMDNYFDLPQ (196 aa)). The tract at residues 19-26 (GHVDHGKT) is G1. 19–26 (GHVDHGKT) is a GTP binding site. Thr-26 serves as a coordination point for Mg(2+). Residues 61–65 (GITIN) are G2. The interval 82 to 85 (DCPG) is G3. GTP-binding positions include 82–86 (DCPGH) and 137–140 (NKLD). Positions 137 to 140 (NKLD) are G4. Positions 173–175 (SAF) are G5.

The protein belongs to the TRAFAC class translation factor GTPase superfamily. Classic translation factor GTPase family. EF-Tu/EF-1A subfamily. In terms of assembly, monomer.

The protein resides in the cytoplasm. The enzyme catalyses GTP + H2O = GDP + phosphate + H(+). Functionally, GTP hydrolase that promotes the GTP-dependent binding of aminoacyl-tRNA to the A-site of ribosomes during protein biosynthesis. This Borrelia turicatae (strain 91E135) protein is Elongation factor Tu.